The sequence spans 205 residues: Adenylyl-sulfate kinase (205 aa).

Gly31–Ser38 lines the ATP pocket. Catalysis depends on Ser105, which acts as the Phosphoserine intermediate.

Belongs to the APS kinase family.

It catalyses the reaction adenosine 5'-phosphosulfate + ATP = 3'-phosphoadenylyl sulfate + ADP + H(+). The protein operates within sulfur metabolism; hydrogen sulfide biosynthesis; sulfite from sulfate: step 2/3. Catalyzes the synthesis of activated sulfate. This Shewanella sp. (strain MR-7) protein is Adenylyl-sulfate kinase.